A 196-amino-acid polypeptide reads, in one-letter code: Glycerol-3-phosphate acyltransferase (196 aa).

4 helical membrane passes run 4–24 (IYIA…GLIL), 70–90 (VLIA…LGAF), 111–131 (IGVL…LWLA), and 152–172 (IFLW…LTLL).

Belongs to the PlsY family. As to quaternary structure, probably interacts with PlsX.

It is found in the cell inner membrane. It carries out the reaction an acyl phosphate + sn-glycerol 3-phosphate = a 1-acyl-sn-glycero-3-phosphate + phosphate. The protein operates within lipid metabolism; phospholipid metabolism. In terms of biological role, catalyzes the transfer of an acyl group from acyl-phosphate (acyl-PO(4)) to glycerol-3-phosphate (G3P) to form lysophosphatidic acid (LPA). This enzyme utilizes acyl-phosphate as fatty acyl donor, but not acyl-CoA or acyl-ACP. This is Glycerol-3-phosphate acyltransferase from Rhodopseudomonas palustris (strain BisB5).